The primary structure comprises 320 residues: Aspartate carbamoyltransferase catalytic subunit (320 aa).

Carbamoyl phosphate is bound by residues Arg68 and Thr69. Lys96 contributes to the L-aspartate binding site. The carbamoyl phosphate site is built by Arg118, His148, and Gln151. Residues Arg181 and Arg236 each contribute to the L-aspartate site. The carbamoyl phosphate site is built by Gly277 and Pro278.

Belongs to the aspartate/ornithine carbamoyltransferase superfamily. ATCase family. In terms of assembly, heterododecamer (2C3:3R2) of six catalytic PyrB chains organized as two trimers (C3), and six regulatory PyrI chains organized as three dimers (R2).

The enzyme catalyses carbamoyl phosphate + L-aspartate = N-carbamoyl-L-aspartate + phosphate + H(+). Its pathway is pyrimidine metabolism; UMP biosynthesis via de novo pathway; (S)-dihydroorotate from bicarbonate: step 2/3. In terms of biological role, catalyzes the condensation of carbamoyl phosphate and aspartate to form carbamoyl aspartate and inorganic phosphate, the committed step in the de novo pyrimidine nucleotide biosynthesis pathway. In Leptothrix cholodnii (strain ATCC 51168 / LMG 8142 / SP-6) (Leptothrix discophora (strain SP-6)), this protein is Aspartate carbamoyltransferase catalytic subunit.